Consider the following 190-residue polypeptide: Peptidyl-prolyl cis-trans isomerase A (190 aa).

The signal sequence occupies residues 1–24 (MFKSTLAAMAAVFALSALSPAAMA). The 162-residue stretch at 27–188 (GDPHVLLTTS…KPVVILSAKV (162 aa)) folds into the PPIase cyclophilin-type domain.

This sequence belongs to the cyclophilin-type PPIase family.

The protein resides in the periplasm. It carries out the reaction [protein]-peptidylproline (omega=180) = [protein]-peptidylproline (omega=0). PPIases accelerate the folding of proteins. It catalyzes the cis-trans isomerization of proline imidic peptide bonds in oligopeptides. The protein is Peptidyl-prolyl cis-trans isomerase A (ppiA) of Escherichia coli O157:H7.